The sequence spans 706 residues: Transferrin-binding protein B (706 aa).

The N-terminal stretch at 1–20 (MKHIPLTTLCVAISAVLLTA) is a signal peptide. The N-palmitoyl cysteine moiety is linked to residue C21. C21 carries the S-diacylglycerol cysteine lipid modification. 2 disordered regions span residues 26-92 (GSNP…KEQV) and 384-412 (GSAI…LEGG). The span at 42-51 (GNTGNTGNAG) shows a compositional bias: gly residues. Over residues 389–410 (SDKEKDSETKHPFTSDAKDRLE) the composition is skewed to basic and acidic residues.

This sequence belongs to the TbpB family.

The protein localises to the cell outer membrane. Its subcellular location is the cell surface. Functionally, moraxella acquires iron by extracting it from serum transferrin (TF) in its human host. Acts as a transferrin receptor and is required for transferrin utilization. The polypeptide is Transferrin-binding protein B (Moraxella catarrhalis (Branhamella catarrhalis)).